The primary structure comprises 263 residues: Taurine import ATP-binding protein TauB (263 aa).

Residues 4–235 form the ABC transporter domain; it reads LTAEAISLSF…RYAAGETVRS (232 aa). 40–47 is a binding site for ATP; that stretch reads GPSGCGKS.

The protein belongs to the ABC transporter superfamily. Taurine importer (TC 3.A.1.17.1) family. In terms of assembly, the complex is composed of two ATP-binding proteins (TauB), two transmembrane proteins (TauC) and a solute-binding protein (TauA).

It is found in the cell inner membrane. The enzyme catalyses taurine(out) + ATP + H2O = taurine(in) + ADP + phosphate + H(+). In terms of biological role, part of the ABC transporter complex TauABC involved in taurine import. Responsible for energy coupling to the transport system. The chain is Taurine import ATP-binding protein TauB from Pseudomonas aeruginosa (strain UCBPP-PA14).